Reading from the N-terminus, the 116-residue chain is PTS system N,N'-diacetylchitobiose-specific EIIA component (116 aa).

Positions 15 to 113 (EELEEVVMGL…ITELIELHEK (99 aa)) constitute a PTS EIIA type-3 domain. H89 (tele-phosphohistidine intermediate) is an active-site residue. Phosphohistidine; by HPr is present on H89.

As to quaternary structure, forms a complex with ChbB (EIIB). ChbA is a homotrimer. Mg(2+) is required as a cofactor.

The protein resides in the cytoplasm. The phosphoenolpyruvate-dependent sugar phosphotransferase system (sugar PTS), a major carbohydrate active transport system, catalyzes the phosphorylation of incoming sugar substrates concomitantly with their translocation across the cell membrane. The enzyme II ChbABC PTS system is involved in the transport of the chitin disaccharide N,N'-diacetylchitobiose (GlcNAc2). This is PTS system N,N'-diacetylchitobiose-specific EIIA component (chbA) from Escherichia coli O157:H7.